Reading from the N-terminus, the 121-residue chain is Small ribosomal subunit protein uS13 (121 aa).

The segment at 92 to 121 (RKGLPVRGQRTKTNARTRKGPRKSGVQLKK) is disordered.

It belongs to the universal ribosomal protein uS13 family. Part of the 30S ribosomal subunit. Forms a loose heterodimer with protein S19. Forms two bridges to the 50S subunit in the 70S ribosome.

Its function is as follows. Located at the top of the head of the 30S subunit, it contacts several helices of the 16S rRNA. In the 70S ribosome it contacts the 23S rRNA (bridge B1a) and protein L5 of the 50S subunit (bridge B1b), connecting the 2 subunits; these bridges are implicated in subunit movement. Contacts the tRNAs in the A and P-sites. The sequence is that of Small ribosomal subunit protein uS13 from Polynucleobacter asymbioticus (strain DSM 18221 / CIP 109841 / QLW-P1DMWA-1) (Polynucleobacter necessarius subsp. asymbioticus).